Consider the following 393-residue polypeptide: Bone morphogenetic protein 2 (393 aa).

The N-terminal stretch at 1–19 (MVAGTRCLLVLLLPQVLLG) is a signal peptide. The propeptide at 20–279 (GAAGLIPELG…GHPLHKREKR (260 aa)) is cleaved by PCSK5. S85 is modified (phosphoserine). N-linked (GlcNAc...) asparagine glycans are attached at residues N133, N161, and N197. Positions 268–290 (GKGHPLHKREKRQAKHKQRKRLK) are disordered. Residues 271 to 290 (HPLHKREKRQAKHKQRKRLK) are compositionally biased toward basic residues. 3 disulfide bridges follow: C293–C358, C322–C390, and C326–C392. N-linked (GlcNAc...) asparagine glycosylation occurs at N335.

It belongs to the TGF-beta family. As to quaternary structure, homodimer; disulfide-linked. Interacts with SOSTDC1. Interacts with GREM2, RGMA, RGMB and RGMC. Interacts with ASPN. Interacts with MAFP5. Interacts with FBN1 (via N-terminal domain) and FBN2. Interacts with type I receptor BMPR1A. Interacts with type II receptor BMPR2. Interacts with SCUBE3. Interacts with TNFAIP6 (primarily via Link domain); this interaction is inhibited by hyaluronan. Interacts with ERFE. Interacts with BMPR1A/ALK3; the interaction may induce HAMP expression. Forms heterodimers with BMP6 in vitro; the heterodimer then binds to its receptor BMPR1A /ALK3 and may induce HAMP expression. Interacts with TGFBR3. In terms of tissue distribution, expressed in femur, calvaria, trachea, lung and ovary.

It localises to the secreted. In terms of biological role, growth factor of the TGF-beta superfamily that plays essential roles in many developmental processes, including cardiogenesis, neurogenesis, and osteogenesis. Induces cartilage and bone formation. Initiates the canonical BMP signaling cascade by associating with type I receptor BMPR1A and type II receptor BMPR2. Once all three components are bound together in a complex at the cell surface, BMPR2 phosphorylates and activates BMPR1A. In turn, BMPR1A propagates signal by phosphorylating SMAD1/5/8 that travel to the nucleus and act as activators and repressors of transcription of target genes. Also acts to promote expression of HAMP, via the interaction with its receptor BMPR1A/ALK3. Can also signal through non-canonical pathways such as ERK/MAP kinase signaling cascade that regulates osteoblast differentiation. Also stimulates the differentiation of myoblasts into osteoblasts via the EIF2AK3-EIF2A-ATF4 pathway by stimulating EIF2A phosphorylation which leads to increased expression of ATF4 which plays a central role in osteoblast differentiation. Acts as a positive regulator of odontoblast differentiation during mesenchymal tooth germ formation, expression is repressed during the bell stage by MSX1-mediated inhibition of CTNNB1 signaling. This is Bone morphogenetic protein 2 (Bmp2) from Rattus norvegicus (Rat).